The following is a 303-amino-acid chain: Short chain dehydrogenase pigC (303 aa).

Residues I45, D103, N130, R164, Y196, K200, and T231 each contribute to the NADP(+) site. Catalysis depends on Y196, which acts as the Proton donor. Residue K200 is the Lowers pKa of active site Tyr of the active site.

This sequence belongs to the short-chain dehydrogenases/reductases (SDR) family.

It participates in secondary metabolite biosynthesis. Functionally, short chain dehydrogenase; part of the gene cluster that mediates the biosynthesis of azaphilone pigments (MonAzPs), a complex mixture of compounds with a common azaphilone skeleton very widely used as food colorants. Within the pathway, pigC intercepts the very reactive benzaldehyde produced by the nrPKS pigA to reduce the omega-1 carbonyl to the alcohol to provide the first stable enzyme-free MonAzPs intermediate, 6-(4-hydroxy-2-oxopentyl)-3-methyl-2,4-dioxocyclohexane carbaldehyde, also known as M7PKS-1. The first step of the pathway is performed by the nrPKS pigA that forms the hexaketide precursor from successive condensations of five malonyl-CoA units, with a simple acetyl-CoA starter unit. The role of esterase pigG is not clear, but it may play at most a supplementary role in the formation of the benzaldehyde produced by the pigA nrPKS. This very reactive benzaldehyde is intercepted by the pigC ketoreductase that to provide the first stable enzyme-free MonAzPs intermediate, M7PKS-1. The FAD-dependent monooxygenase pigN hydroxylates M7PKS-1 at C-4, which triggers the formation of the pyran ring. PigJ, pigK and pigD are involved in the acetylation of the pyran ring. PigJ and pigK form the two subunits of a dedicated fungal FAS that produces the side chain fatty acyl moiety of MonAzPs and pigD transfers the fatty acyl chain to the C-4 alcohol. PigM and pigO are involved in the elimination of the omega-1 alcohol. PigM acts as an O-acetyltransferase that synthesizes the putative O-11 acetyl intermediate whereas pigO eliminates acetic acid to yield an intermediate with a C10(11) double bond. The dehydration of the C-11 alcohol followed by the reduction of the C6(7) double bond by the NAD(P)H-dependent oxidoreductase pigE increases the electrophilicity of the C-5 ketone of the resulting acyl benzopyran. This in turn sets up the C-5 ketone for an intramolecular Knoevenagel aldol condensation with the C-20 enol of the side chain. This condensation affords the characteristic linear tricyclic carbon skeletons of the yellow pigments that serve as the common precursors for the classical yellow pigments monascin and ankaflavin, orange pigments rubopunctatin and monascorubrin, and red pigments ribropunctamine and monascorubramine. The FAD-dependent oxidoreductase pigF is especially invoved in the biosynthesis of orange and red pigments via desaturation of C6(7). This chain is Short chain dehydrogenase pigC, found in Monascus ruber (Mold).